We begin with the raw amino-acid sequence, 275 residues long: 4-hydroxy-3-methylbut-2-enyl diphosphate reductase (275 aa).

[4Fe-4S] cluster is bound at residue Cys-12. Positions 40 and 70 each coordinate (2E)-4-hydroxy-3-methylbut-2-enyl diphosphate. 2 residues coordinate dimethylallyl diphosphate: His-40 and His-70. Residues His-40 and His-70 each contribute to the isopentenyl diphosphate site. Cys-92 is a [4Fe-4S] cluster binding site. A (2E)-4-hydroxy-3-methylbut-2-enyl diphosphate-binding site is contributed by His-119. His-119 contacts dimethylallyl diphosphate. His-119 lines the isopentenyl diphosphate pocket. Glu-121 (proton donor) is an active-site residue. A (2E)-4-hydroxy-3-methylbut-2-enyl diphosphate-binding site is contributed by Thr-151. Cys-181 serves as a coordination point for [4Fe-4S] cluster. 4 residues coordinate (2E)-4-hydroxy-3-methylbut-2-enyl diphosphate: Ser-209, Ser-210, Asn-211, and Ser-251. Dimethylallyl diphosphate-binding residues include Ser-209, Ser-210, Asn-211, and Ser-251. Positions 209, 210, 211, and 251 each coordinate isopentenyl diphosphate.

Belongs to the IspH family. [4Fe-4S] cluster serves as cofactor.

The catalysed reaction is isopentenyl diphosphate + 2 oxidized [2Fe-2S]-[ferredoxin] + H2O = (2E)-4-hydroxy-3-methylbut-2-enyl diphosphate + 2 reduced [2Fe-2S]-[ferredoxin] + 2 H(+). It carries out the reaction dimethylallyl diphosphate + 2 oxidized [2Fe-2S]-[ferredoxin] + H2O = (2E)-4-hydroxy-3-methylbut-2-enyl diphosphate + 2 reduced [2Fe-2S]-[ferredoxin] + 2 H(+). The protein operates within isoprenoid biosynthesis; dimethylallyl diphosphate biosynthesis; dimethylallyl diphosphate from (2E)-4-hydroxy-3-methylbutenyl diphosphate: step 1/1. It functions in the pathway isoprenoid biosynthesis; isopentenyl diphosphate biosynthesis via DXP pathway; isopentenyl diphosphate from 1-deoxy-D-xylulose 5-phosphate: step 6/6. Catalyzes the conversion of 1-hydroxy-2-methyl-2-(E)-butenyl 4-diphosphate (HMBPP) into a mixture of isopentenyl diphosphate (IPP) and dimethylallyl diphosphate (DMAPP). Acts in the terminal step of the DOXP/MEP pathway for isoprenoid precursor biosynthesis. The polypeptide is 4-hydroxy-3-methylbut-2-enyl diphosphate reductase (Thermotoga sp. (strain RQ2)).